The primary structure comprises 100 residues: Small ribosomal subunit protein uS14c (100 aa).

This sequence belongs to the universal ribosomal protein uS14 family. In terms of assembly, part of the 30S ribosomal subunit.

Its subcellular location is the plastid. It is found in the chloroplast. Its function is as follows. Binds 16S rRNA, required for the assembly of 30S particles. In Chlamydomonas reinhardtii (Chlamydomonas smithii), this protein is Small ribosomal subunit protein uS14c.